Reading from the N-terminus, the 274-residue chain is uncharacterized protein (274 aa).

A signal peptide spans 1-21 (MRKLTLLPLLLIITGLLTVQA). A helical membrane pass occupies residues 249-266 (TSAFVILTASALIFIYLF).

Its subcellular location is the membrane. This is an uncharacterized protein from Archaeoglobus fulgidus (strain ATCC 49558 / DSM 4304 / JCM 9628 / NBRC 100126 / VC-16).